The following is a 322-amino-acid chain: 1-aminocyclopropane-1-carboxylate oxidase 1 (322 aa).

One can recognise a Fe2OG dioxygenase domain in the interval 159–259 (PTFGTKVSSY…RMSIASFYNP (101 aa)). Positions 183, 185, and 240 each coordinate Fe cation.

Belongs to the iron/ascorbate-dependent oxidoreductase family. Fe cation is required as a cofactor.

It carries out the reaction 1-aminocyclopropane-1-carboxylate + L-ascorbate + O2 = ethene + L-dehydroascorbate + hydrogen cyanide + CO2 + 2 H2O. The protein operates within alkene biosynthesis; ethylene biosynthesis via S-adenosyl-L-methionine; ethylene from S-adenosyl-L-methionine: step 2/2. In Oryza sativa subsp. japonica (Rice), this protein is 1-aminocyclopropane-1-carboxylate oxidase 1 (ACO1).